The following is a 502-amino-acid chain: Nucleoside transporter 2 (502 aa).

Residues 1 to 30 (MTTSSDSAMVNHTPSPWYKFGFKSFAEFNT) lie on the Cytoplasmic side of the membrane. A helical membrane pass occupies residues 31–51 (YVTFVFLGMSIMMVASAVTSA). The Extracellular segment spans residues 52–81 (PDFLTRYYVYATGDPDAVAETPLFWNNANT). A helical transmembrane segment spans residues 82 to 102 (FYNAGTYVLQVLTELFSLTPF). Residues 103-111 (MRRIPLSVR) are Cytoplasmic-facing. Residues 112 to 132 (LFVGLGIPFAELLLIIIVPAA) traverse the membrane as a helical segment. Residues 133–137 (TIKSQ) lie on the Extracellular side of the membrane. The chain crosses the membrane as a helical span at residues 138–158 (HGAIAVIMVVACVGGFSKALC). Residues 159–178 (DSCTNALVGPFPTKFMNGAQ) are Cytoplasmic-facing. The chain crosses the membrane as a helical span at residues 179-199 (WGLTVIALLMSIIQIILKVSM). Over 200 to 210 (GTSFHDILTMS) the chain is Extracellular. A helical membrane pass occupies residues 211–231 (RIYFGICIGIQLFAIFELAIL). Residues 232–352 (RFNPFAQKYI…SVFKRVYPML (121 aa)) are Cytoplasmic-facing. A disordered region spans residues 252 to 273 (AQNNESTLEETAPSMNEPAAGD). Residues 353-373 (VCVFLIYFTSLLTFPGVFFLV) form a helical membrane-spanning segment. Topologically, residues 374 to 380 (STTSGWY) are extracellular. Residues 381-401 (MTVIVTLFNAGDFISRMVLMF) traverse the membrane as a helical segment. The Cytoplasmic segment spans residues 402 to 408 (RPLRPSP). A helical transmembrane segment spans residues 409–429 (KVVVAGTLGRLIIIPFLVLCV). At 430-436 (RGIIRGE) the chain is on the extracellular side. A helical transmembrane segment spans residues 437 to 457 (ALPYVLITLLGLTNGYFGCMA). Over 458-477 (CIHCPRTTTLRYAGERSLAA) the chain is Cytoplasmic. The chain crosses the membrane as a helical span at residues 478 to 498 (MLSGISIMLGLCFGSNLSLAI). The Extracellular segment spans residues 499 to 502 (TLTH).

This sequence belongs to the SLC29A/ENT transporter (TC 2.A.57) family.

The protein resides in the cell membrane. The catalysed reaction is inosine(in) = inosine(out). It catalyses the reaction guanosine(in) = guanosine(out). In terms of biological role, high affinity transporter for inosine and guanosine. The polypeptide is Nucleoside transporter 2 (Crithidia fasciculata).